The primary structure comprises 316 residues: uncharacterized protein (316 aa).

Belongs to the asfivirus F317L family.

The protein resides in the virion. This is an uncharacterized protein from Ornithodoros (relapsing fever ticks).